Reading from the N-terminus, the 1903-residue chain is Plexin-A4 (1903 aa).

An N-terminal signal peptide occupies residues 1 to 26; the sequence is MAFHNRRWNFTFSCCVVVLLLPLVAA. The 489-residue stretch at 27–515 folds into the Sema domain; sequence RPQQPSAATR…SESQLTRVPV (489 aa). Residues 27–1246 lie on the Extracellular side of the membrane; that stretch reads RPQQPSAATR…ITSDSPLSST (1220 aa). Cystine bridges form between cysteine 97-cysteine 106 and cysteine 132-cysteine 140. Asparagine 166 carries N-linked (GlcNAc...) asparagine glycosylation. 3 disulfide bridges follow: cysteine 291–cysteine 413, cysteine 307–cysteine 364, and cysteine 382–cysteine 401. The N-linked (GlcNAc...) asparagine glycan is linked to asparagine 450. Residues 517–567 form the PSI 1 domain; the sequence is ACEQYSSCNECLGSGDPHCGWCVLHSMCTRKEKCERSSEPRRFASNIKQCV. Cystine bridges form between cysteine 518–cysteine 535, cysteine 524–cysteine 566, cysteine 527–cysteine 544, and cysteine 538–cysteine 550. Residues asparagine 575 and asparagine 600 are each glycosylated (N-linked (GlcNAc...) asparagine). Cysteine 601 and cysteine 620 are joined by a disulfide. Residues asparagine 656, asparagine 663, asparagine 764, and asparagine 772 are each glycosylated (N-linked (GlcNAc...) asparagine). Residues 663 to 710 enclose the PSI 2 domain; the sequence is NCSVHKSCLSCVGSPYQCHWCKYRHTCTHDPSSCSFQEGRVKQPEECP. The 54-residue stretch at 811–864 folds into the PSI 3 domain; that stretch reads KCDARRESCGLCLKADPLFGCVWCKGENRCSLKQHCSYPQSMWLEHNGINSKCT. 4 consecutive IPT/TIG domains span residues 866-960, 962-1046, 1049-1148, and 1151-1246; these read PRIT…YYFV, PQLL…FEYV, PTIT…FVYY, and PVFE…LSST. Asparagine 981, asparagine 992, asparagine 1025, asparagine 1141, asparagine 1189, and asparagine 1214 each carry an N-linked (GlcNAc...) asparagine glycan. A helical membrane pass occupies residues 1247–1267; that stretch reads AVISIAGAGGLLIFFIVIVLI. The Cytoplasmic segment spans residues 1268 to 1903; it reads AYKRKSRESD…QVVAFMSLES (636 aa).

The protein belongs to the plexin family.

The protein localises to the cell membrane. Functionally, involved in the development of primary sensory neurons especially in branching of the peripheral axons. Interacts with the SLIT2 signaling specifically to promote axonal branching of Rohon-Beard neurons and the trigeminal sensory ganglion neurons. The chain is Plexin-A4 (plxna4) from Danio rerio (Zebrafish).